A 511-amino-acid chain; its full sequence is Chromosomal replication initiator protein DnaA (511 aa).

The interval 1–90 (MSVELWQQCV…RRSSAPRAAP (90 aa)) is domain I, interacts with DnaA modulators. The interval 91–174 (NAPVSAAMAA…QVEGALKHTS (84 aa)) is domain II. The segment at 125–161 (TAEPAQASDMAEASSRDSYDSMADSAPAPVAPGRTEQ) is disordered. The domain III, AAA+ region stretch occupies residues 175-391 (YLNRTFTFET…GALKRVIAHS (217 aa)). The ATP site is built by Gly219, Gly221, Lys222, and Thr223. The segment at 392–511 (HFMGRDITIE…YKNLLRTLTT (120 aa)) is domain IV, binds dsDNA.

Belongs to the DnaA family. As to quaternary structure, oligomerizes as a right-handed, spiral filament on DNA at oriC.

Its subcellular location is the cytoplasm. In terms of biological role, plays an essential role in the initiation and regulation of chromosomal replication. ATP-DnaA binds to the origin of replication (oriC) to initiate formation of the DNA replication initiation complex once per cell cycle. Binds the DnaA box (a 9 base pair repeat at the origin) and separates the double-stranded (ds)DNA. Forms a right-handed helical filament on oriC DNA; dsDNA binds to the exterior of the filament while single-stranded (ss)DNA is stabiized in the filament's interior. The ATP-DnaA-oriC complex binds and stabilizes one strand of the AT-rich DNA unwinding element (DUE), permitting loading of DNA polymerase. After initiation quickly degrades to an ADP-DnaA complex that is not apt for DNA replication. Binds acidic phospholipids. The sequence is that of Chromosomal replication initiator protein DnaA from Pseudomonas putida (strain W619).